The following is a 100-amino-acid chain: Small ribosomal subunit protein uS14c (100 aa).

The protein belongs to the universal ribosomal protein uS14 family. Part of the 30S ribosomal subunit.

It localises to the plastid. Its subcellular location is the chloroplast. Functionally, binds 16S rRNA, required for the assembly of 30S particles. This Capsella bursa-pastoris (Shepherd's purse) protein is Small ribosomal subunit protein uS14c.